The chain runs to 126 residues: RxLR effector protein BLR31 (126 aa).

An N-terminal signal peptide occupies residues 1-22 (MLLSRAISVLALLACIRCGVHA). The RxLR-dEER motif lies at 44 to 58 (RLLRTSVDFKDSEER).

It belongs to the RxLR effector family.

Its subcellular location is the secreted. The protein localises to the host cell. In terms of biological role, secreted effector that triggers a hypersensitive response (HR) in 3 Lactuca saligna accessions (CGN05947, CGN05310, CGN05304). This Bremia lactucae (Lettuce downy mildew) protein is RxLR effector protein BLR31.